The primary structure comprises 567 residues: Zinc finger protein 512 (567 aa).

The tract at residues 1–32 (MSSRLGAVPATSGPTTFKQQRSTRIVGAKNSR) is disordered. Residues 12-23 (SGPTTFKQQRST) are compositionally biased toward polar residues. Residues Lys-18 and Lys-84 each participate in a glycyl lysine isopeptide (Lys-Gly) (interchain with G-Cter in SUMO2) cross-link. Positions 86–148 (AATSHVEGSG…QARRIRKEPP (63 aa)) are disordered. Residues 119–130 (KKHKLYGRKQRP) are compositionally biased toward basic residues. The segment at 197 to 220 (FTCHHCGKQLRSLAGMKYHVMANH) adopts a C2H2-type 1 zinc-finger fold. Lys-227 is covalently cross-linked (Glycyl lysine isopeptide (Lys-Gly) (interchain with G-Cter in SUMO2)). The C2H2-type 2 zinc-finger motif lies at 287–310 (LKCHHCGKPYRSKAGLAYHLRSEH). Lys-333 is covalently cross-linked (Glycyl lysine isopeptide (Lys-Gly) (interchain with G-Cter in SUMO2)). A C2H2-type 3; atypical zinc finger spans residues 406 to 430 (IQCPNQGCEAVYSSVSGLKAHLGSC). Residues 440 to 463 (YKCLLCQKEFVSESGVKYHINSVH) form a C2H2-type 4 zinc finger. The segment at 486–567 (QRQQEEEKRR…PKTNHKRGRK (82 aa)) is disordered. The span at 495–508 (RQQHRSRRSLRRRQ) shows a compositional bias: basic residues. The span at 523 to 532 (VGKDQRRNNE) shows a compositional bias: basic and acidic residues. The segment covering 556-567 (KPPKTNHKRGRK) has biased composition (basic residues).

This sequence belongs to the krueppel C2H2-type zinc-finger protein family.

The protein resides in the nucleus. May be involved in transcriptional regulation. The protein is Zinc finger protein 512 (ZNF512) of Pongo abelii (Sumatran orangutan).